The following is a 251-amino-acid chain: Xylose/arabinose import ATP-binding protein XylG (251 aa).

Residues 5–241 (LEIRDVHKSF…EITEVMTSFA (237 aa)) enclose the ABC transporter domain. 37–44 (GDNGAGKS) is an ATP binding site.

This sequence belongs to the ABC transporter superfamily. As to quaternary structure, the complex is composed of two ATP-binding proteins (XylG), two transmembrane proteins (XylH) and a solute-binding protein (XylF).

The protein localises to the cell membrane. The catalysed reaction is D-xylose(out) + ATP + H2O = D-xylose(in) + ADP + phosphate + H(+). It carries out the reaction L-arabinose(out) + ATP + H2O = L-arabinose(in) + ADP + phosphate + H(+). Functionally, part of the ABC transporter complex XylFGH involved in the uptake of xylose and arabinose. Responsible for energy coupling to the transport system. This is Xylose/arabinose import ATP-binding protein XylG from Sulfolobus acidocaldarius (strain ATCC 33909 / DSM 639 / JCM 8929 / NBRC 15157 / NCIMB 11770).